A 387-amino-acid chain; its full sequence is uncharacterized protein (387 aa).

Disordered stretches follow at residues 1–126 (MDGR…GDDE), 138–169 (GNQG…RNEE), and 275–298 (SSIF…AGNK). Residues 32 to 45 (SSDHRTSNSAESKK) are compositionally biased toward basic and acidic residues. Polar residues-rich tracts occupy residues 49 to 63 (SGKS…NNDN) and 78 to 93 (DLSS…SKGT). Over residues 155–169 (ENGKNDIEKNNRNEE) the composition is skewed to basic and acidic residues. Residues 275-296 (SSIFSDSQAVTTDDEGISSTAG) show a composition bias toward polar residues.

The protein belongs to the ThrE exporter (TC 2.A.79) family.

This is an uncharacterized protein from Saccharomyces cerevisiae (strain ATCC 204508 / S288c) (Baker's yeast).